Consider the following 513-residue polypeptide: Coiled-coil domain-containing protein 102B (513 aa).

Residues 1–217 (MNLDSIHRLI…IDSLKLSEEM (217 aa)) are required for centriolar localization and for interaction with CEP250, CROCC, LRRC45 and NEK2. Phosphoserine occurs at positions 21, 22, 34, 135, 142, 194, and 210. Residues 72–142 (ELRLRELEEV…ELSTLKKKQS (71 aa)) are a coiled coil. Coiled-coil stretches lie at residues 268 to 337 (QKIL…ESKS) and 363 to 513 (WDKR…LQNW). 3 positions are modified to phosphoserine: S401, S404, and S406. Residues 493–513 (LDEEKERNENLETELRHLQNW) form a disordered region.

Interacts (via N-terminus) with centriolar protein CEP250/CNAP1; the interaction results in recruitment of CCDC102B to the proximal ends of centrioles. Interacts (via N-terminus) with CROCC/rootletin and LRRC45. Interacts (via N-terminus) with serine/threonine-protein kinase NEK2; the interaction results in phosphorylation of CCDC102B. Post-translationally, phosphorylated directly or indirectly by NEK2 during mitosis which causes dissociation of CCDC102B from the centrosome and allows for centrosome separation.

It is found in the cytoplasm. Its subcellular location is the cytoskeleton. The protein localises to the microtubule organizing center. The protein resides in the centrosome. It localises to the centriole. During interphase, forms fibers at the proximal ends of centrioles to maintain centrosome cohesion. During mitosis, dissociates from the centrosome following phosphorylation to allow centrosome separation. Contributes to CROCC/rootletin filament formation. This chain is Coiled-coil domain-containing protein 102B (CCDC102B), found in Homo sapiens (Human).